A 1487-amino-acid chain; its full sequence is Collagen alpha-1(II) chain (1487 aa).

Positions 1-25 are cleaved as a signal peptide; the sequence is MIRLGAPQSLVLLTLLIAAVLRCQG. A propeptide spans 26–181 (N-terminal propeptide); the sequence is QDAQEAGSCL…PGLSAGNFAA (156 aa). One can recognise a VWFC domain in the interval 32 to 89; that stretch reads GSCLQNGQRYKDKDVWKPSSCRICVCDTGNVLCDDIICEDPDCLNPEIPFGECCPICP. A disordered region spans residues 96 to 179; sequence SGKLGPKGQK…GPPGLSAGNF (84 aa). Basic and acidic residues-rich tracts occupy residues 104 to 115 and 132 to 153; these read QKGEPGDIRDII and PRGD…RDGE. The span at 157-172 shows a compositional bias: pro residues; it reads PGNPGPAGPPGPPGPP. 5-hydroxylysine is present on Lys-190. O-linked (Gal...) hydroxylysine glycosylation occurs at Lys-190. The interval 191–1237 is disordered; it reads AGGAQMGVMQ…QREKGPDPMQ (1047 aa). Low complexity predominate over residues 192-203; the sequence is GGAQMGVMQGPM. The tract at residues 201 to 1214 is triple-helical region; the sequence is GPMGPMGPRG…PGPPGPPGPP (1014 aa). Pro residues predominate over residues 208 to 217; the sequence is PRGPPGPAGA. The segment covering 218–239 has biased composition (low complexity); sequence PGPQGFQGNPGEPGEPGVSGPM. The span at 251 to 265 shows a compositional bias: basic and acidic residues; that stretch reads PGDDGEAGKPGKSGE. Residues Lys-287, Lys-299, and Lys-308 each carry the 5-hydroxylysine modification. Residues Lys-287, Lys-299, and Lys-308 are each glycosylated (O-linked (Gal...) hydroxylysine). Low complexity-rich tracts occupy residues 310-320 and 335-350; these read ESGSPGENGSP and TGPA…DGQP. Residues 360–369 are compositionally biased toward gly residues; that stretch reads GPAGGPGFPG. 2 stretches are compositionally biased toward low complexity: residues 370–382 and 403–431; these read APGA…PTGA and PAGA…AGAP. Lys-374 carries the 5-hydroxylysine modification. A glycan (O-linked (Gal...) hydroxylysine) is linked at Lys-374. Positions 433–442 are enriched in pro residues; sequence FPGPRGPPGP. The segment covering 472–485 has biased composition (low complexity); sequence ETGPAGPQGAPGPA. Lys-608 and Lys-620 each carry 5-hydroxylysine. 2 O-linked (Gal...) hydroxylysine glycosylation sites follow: Lys-608 and Lys-620. Residues 622–631 are compositionally biased toward low complexity; it reads LAGAPGLRGL. A 4-hydroxyproline mark is found at Pro-659 and Pro-668. The residue at position 670 (Pro-670) is a 3-hydroxyproline. 2 positions are modified to 4-hydroxyproline: Pro-671 and Pro-674. The segment covering 706 to 736 has biased composition (low complexity); it reads ERGSPGAQGLQGPRGLPGTPGTDGPKGAAGP. A compositionally biased stretch (basic and acidic residues) spans 764-775; the sequence is KGDRGDVGEKGP. 2 stretches are compositionally biased toward low complexity: residues 833–848 and 877–914; these read AGFA…PGAK and PTGV…NGNP. Position 907 is a 3-hydroxyproline (Pro-907). Residues Pro-908, Pro-914, and Pro-920 each carry the 4-hydroxyproline modification. Low complexity predominate over residues 962 to 980; sequence DGPSGLDGPPGPQGLAGQR. Positions 1069–1079 are enriched in pro residues; the sequence is APGPPGSPGPA. Residues 1115–1129 show a composition bias toward basic and acidic residues; that stretch reads RGDKGESGEQGERGL. A 3-hydroxyproline modification is found at Pro-1144. Low complexity-rich tracts occupy residues 1148–1157 and 1171–1181; these read SGDQGASGPA and PSGKDGSNGIP. Position 1181 is a 4-hydroxyproline (Pro-1181). Residue Pro-1186 is modified to 3-hydroxyproline. Pro-1187 bears the 4-hydroxyproline mark. The segment covering 1199–1216 has biased composition (pro residues); it reads VGPPGSPGPPGPPGPPGP. Pro-1201 is modified (3-hydroxyproline). 4-hydroxyproline is present on residues Pro-1202 and Pro-1205. A 3-hydroxyproline modification is found at Pro-1207. Residues Pro-1208 and Pro-1211 each carry the 4-hydroxyproline modification. At Pro-1213 the chain carries 3-hydroxyproline. Pro-1214 is subject to 4-hydroxyproline. Positions 1215–1241 are nonhelical region (C-terminal); sequence GPGIDMSAFAGLGQREKGPDPMQYMRA. Positions 1253-1487 constitute a Fibrillar collagen NC1 domain; the sequence is VEVDATLKSL…GVDIGPVCFL (235 aa). Cystine bridges form between Cys-1283–Cys-1315, Cys-1323–Cys-1485, and Cys-1393–Cys-1438. Ca(2+)-binding residues include Asp-1301, Asn-1303, Gln-1304, Cys-1306, and Asp-1309.

This sequence belongs to the fibrillar collagen family. Homotrimers of alpha 1(II) chains. Post-translationally, contains mostly 4-hydroxyproline. Prolines at the third position of the tripeptide repeating unit (G-X-P) are 4-hydroxylated in some or all of the chains. Contains 3-hydroxyproline at a few sites. This modification occurs on the first proline residue in the sequence motif Gly-Pro-Hyp, where Hyp is 4-hydroxyproline. In terms of processing, lysine residues at the third position of the tripeptide repeating unit (G-X-Y) are 5-hydroxylated in some or all of the chains. Post-translationally, O-glycosylated on hydroxylated lysine residues. The O-linked glycan consists of a Glc-Gal disaccharide.

The protein resides in the secreted. Its subcellular location is the extracellular space. It localises to the extracellular matrix. Its function is as follows. Type II collagen is specific for cartilaginous tissues. It is essential for the normal embryonic development of the skeleton, for linear growth and for the ability of cartilage to resist compressive forces. This chain is Collagen alpha-1(II) chain, found in Mus musculus (Mouse).